The sequence spans 156 residues: Crossover junction endodeoxyribonuclease RuvC (156 aa).

Active-site residues include D7, E66, and D138. D7, E66, and D138 together coordinate Mg(2+).

This sequence belongs to the RuvC family. In terms of assembly, homodimer which binds Holliday junction (HJ) DNA. The HJ becomes 2-fold symmetrical on binding to RuvC with unstacked arms; it has a different conformation from HJ DNA in complex with RuvA. In the full resolvosome a probable DNA-RuvA(4)-RuvB(12)-RuvC(2) complex forms which resolves the HJ. Mg(2+) serves as cofactor.

It localises to the cytoplasm. It catalyses the reaction Endonucleolytic cleavage at a junction such as a reciprocal single-stranded crossover between two homologous DNA duplexes (Holliday junction).. In terms of biological role, the RuvA-RuvB-RuvC complex processes Holliday junction (HJ) DNA during genetic recombination and DNA repair. Endonuclease that resolves HJ intermediates. Cleaves cruciform DNA by making single-stranded nicks across the HJ at symmetrical positions within the homologous arms, yielding a 5'-phosphate and a 3'-hydroxyl group; requires a central core of homology in the junction. The consensus cleavage sequence is 5'-(A/T)TT(C/G)-3'. Cleavage occurs on the 3'-side of the TT dinucleotide at the point of strand exchange. HJ branch migration catalyzed by RuvA-RuvB allows RuvC to scan DNA until it finds its consensus sequence, where it cleaves and resolves the cruciform DNA. This Ehrlichia chaffeensis (strain ATCC CRL-10679 / Arkansas) protein is Crossover junction endodeoxyribonuclease RuvC.